Reading from the N-terminus, the 950-residue chain is Zinc finger CCCH domain-containing protein 3 (950 aa).

4 disordered regions span residues 32 to 106 (GNSS…HPEP), 127 to 182 (IKPP…TKVG), 201 to 220 (VVKS…RTVS), and 314 to 489 (SEKS…VLRK). Over residues 56 to 74 (RPSRRGFSSHHGPSWRKKY) the composition is skewed to basic residues. Over residues 76–96 (LVNQPVESSDPASDPAFQTSL) the composition is skewed to polar residues. Polar residues predominate over residues 327–338 (PRTTLESGNKAT). Residues 344–360 (KTEKPQPKVDPEVRPEK) show a composition bias toward basic and acidic residues. Over residues 370 to 388 (SPSKYKWKASSPSASSSSS) the composition is skewed to low complexity. The segment covering 402 to 412 (SQLSPVPSRPT) has biased composition (polar residues). At Ser-405 the chain carries Phosphoserine. Residues 438-449 (VKSRTKIIRRRG) are compositionally biased toward basic residues. Positions 460–470 (SPTTATTSKNH) are enriched in polar residues. 5 consecutive C3H1-type zinc fingers follow at residues 662–690 (EKKR…HDPE), 694–717 (VCTR…HHVS), 718–744 (KEKM…HVYV), 745–772 (SRKA…HTLL), and 773–795 (CPDF…HRNQ). Residues 793-950 (RNQKRHGRRT…GKPLHIKPRL (158 aa)) form a disordered region. The span at 828 to 838 (PTTTQRSVRQM) shows a compositional bias: polar residues. Positions 839 to 849 (SSGLASGAEAP) are enriched in low complexity. Ser-851 and Ser-855 each carry phosphoserine. The span at 857-888 (RVLASTSTLSSKATAASSPSPSPSTSSPAPSL) shows a compositional bias: low complexity. Residues 914 to 928 (SLHSSPSPGGQTETG) are compositionally biased toward polar residues. Phosphoserine is present on residues Ser-918, Ser-920, and Ser-934.

In terms of assembly, interacts with SMAD1, SMAD3, SMAD4, CPSF2 and CPSF3.

It is found in the nucleus. Its function is as follows. Required for the export of polyadenylated mRNAs from the nucleus. Enhances ACVR1B-induced SMAD-dependent transcription. Binds to single-stranded DNA but not to double-stranded DNA in vitro. Involved in RNA cleavage. In Mus musculus (Mouse), this protein is Zinc finger CCCH domain-containing protein 3 (Zc3h3).